Here is a 267-residue protein sequence, read N- to C-terminus: 3-methyl-2-oxobutanoate hydroxymethyltransferase (267 aa).

The Mg(2+) site is built by Asp-46 and Asp-85. 3-methyl-2-oxobutanoate-binding positions include 46–47, Asp-85, and Lys-115; that span reads DS. Glu-117 is a binding site for Mg(2+). Glu-184 functions as the Proton acceptor in the catalytic mechanism.

The protein belongs to the PanB family. Homodecamer; pentamer of dimers. Mg(2+) serves as cofactor.

Its subcellular location is the cytoplasm. The enzyme catalyses 3-methyl-2-oxobutanoate + (6R)-5,10-methylene-5,6,7,8-tetrahydrofolate + H2O = 2-dehydropantoate + (6S)-5,6,7,8-tetrahydrofolate. It participates in cofactor biosynthesis; (R)-pantothenate biosynthesis; (R)-pantoate from 3-methyl-2-oxobutanoate: step 1/2. Its function is as follows. Catalyzes the reversible reaction in which hydroxymethyl group from 5,10-methylenetetrahydrofolate is transferred onto alpha-ketoisovalerate to form ketopantoate. This is 3-methyl-2-oxobutanoate hydroxymethyltransferase from Citrifermentans bemidjiense (strain ATCC BAA-1014 / DSM 16622 / JCM 12645 / Bem) (Geobacter bemidjiensis).